We begin with the raw amino-acid sequence, 90 residues long: Large ribosomal subunit protein bL31B-1 (90 aa).

The protein belongs to the bacterial ribosomal protein bL31 family. Type B subfamily. As to quaternary structure, part of the 50S ribosomal subunit.

This Streptomyces coelicolor (strain ATCC BAA-471 / A3(2) / M145) protein is Large ribosomal subunit protein bL31B-1.